The primary structure comprises 394 residues: ATP phosphoribosyltransferase regulatory subunit (394 aa).

It belongs to the class-II aminoacyl-tRNA synthetase family. HisZ subfamily. As to quaternary structure, heteromultimer composed of HisG and HisZ subunits.

It is found in the cytoplasm. Its pathway is amino-acid biosynthesis; L-histidine biosynthesis; L-histidine from 5-phospho-alpha-D-ribose 1-diphosphate: step 1/9. Required for the first step of histidine biosynthesis. May allow the feedback regulation of ATP phosphoribosyltransferase activity by histidine. This chain is ATP phosphoribosyltransferase regulatory subunit, found in Pseudomonas aeruginosa (strain LESB58).